The chain runs to 696 residues: DNA ligase (696 aa).

Residues 41-45 (DGQYD), 90-91 (SL), and Glu120 each bind NAD(+). Lys122 functions as the N6-AMP-lysine intermediate in the catalytic mechanism. The NAD(+) site is built by Arg143, Glu180, Lys296, and Lys320. Cys414, Cys417, Cys433, and Cys439 together coordinate Zn(2+). Residues 603–692 (STPRTLEGLT…PDAVARPAEE (90 aa)) enclose the BRCT domain.

Belongs to the NAD-dependent DNA ligase family. LigA subfamily. Requires Mg(2+) as cofactor. The cofactor is Mn(2+).

It carries out the reaction NAD(+) + (deoxyribonucleotide)n-3'-hydroxyl + 5'-phospho-(deoxyribonucleotide)m = (deoxyribonucleotide)n+m + AMP + beta-nicotinamide D-nucleotide.. Functionally, DNA ligase that catalyzes the formation of phosphodiester linkages between 5'-phosphoryl and 3'-hydroxyl groups in double-stranded DNA using NAD as a coenzyme and as the energy source for the reaction. It is essential for DNA replication and repair of damaged DNA. This Kineococcus radiotolerans (strain ATCC BAA-149 / DSM 14245 / SRS30216) protein is DNA ligase.